Here is a 935-residue protein sequence, read N- to C-terminus: Protein HIRA (935 aa).

7 WD repeats span residues 14–58, 72–111, 131–170, 174–213, 222–261, 277–320, and 325–362; these read HDTG…DKKK, ESQS…NSMG, GHSM…DRIT, DIQL…CVKS, IEET…QTWK, RAMP…KPLF, and IFNH…IGEM. A disordered region spans residues 431-556; that stretch reads SSDIQLTKSM…RNKKRKVPAT (126 aa). Residues 439–468 show a composition bias toward basic and acidic residues; that stretch reads SMEDNSKENESKNSEKTMMEERNKQIDVRK. Over residues 480–492 the composition is skewed to polar residues; sequence GTTTADPMTSLSS. Positions 520–542 are enriched in acidic residues; sequence DLEDSSDSDDDDEEEEEDMEISD.

It belongs to the WD repeat HIR1 family.

The protein resides in the nucleus. Required for replication-independent chromatin assembly and for the periodic repression of histone gene transcription during the cell cycle. This is Protein HIRA from Caenorhabditis elegans.